Consider the following 130-residue polypeptide: Small ribosomal subunit protein uS11 (130 aa).

This sequence belongs to the universal ribosomal protein uS11 family. In terms of assembly, part of the 30S ribosomal subunit. Interacts with proteins S7 and S18. Binds to IF-3.

Functionally, located on the platform of the 30S subunit, it bridges several disparate RNA helices of the 16S rRNA. Forms part of the Shine-Dalgarno cleft in the 70S ribosome. The sequence is that of Small ribosomal subunit protein uS11 from Gluconobacter oxydans (strain 621H) (Gluconobacter suboxydans).